The chain runs to 286 residues: Bifunctional protein FolD (286 aa).

NADP(+) is bound by residues 165 to 167 (GRS), S190, and V231.

Belongs to the tetrahydrofolate dehydrogenase/cyclohydrolase family. Homodimer.

The catalysed reaction is (6R)-5,10-methylene-5,6,7,8-tetrahydrofolate + NADP(+) = (6R)-5,10-methenyltetrahydrofolate + NADPH. The enzyme catalyses (6R)-5,10-methenyltetrahydrofolate + H2O = (6R)-10-formyltetrahydrofolate + H(+). Its pathway is one-carbon metabolism; tetrahydrofolate interconversion. Functionally, catalyzes the oxidation of 5,10-methylenetetrahydrofolate to 5,10-methenyltetrahydrofolate and then the hydrolysis of 5,10-methenyltetrahydrofolate to 10-formyltetrahydrofolate. This Bacillus anthracis (strain A0248) protein is Bifunctional protein FolD.